A 387-amino-acid chain; its full sequence is Chorismate synthase (387 aa).

NADP(+) contacts are provided by R39 and R45. FMN is bound by residues 130–132 (RSS), 251–252 (NA), G295, 310–314 (KPIPT), and R336.

The protein belongs to the chorismate synthase family. In terms of assembly, homotetramer. The cofactor is FMNH2.

It carries out the reaction 5-O-(1-carboxyvinyl)-3-phosphoshikimate = chorismate + phosphate. It participates in metabolic intermediate biosynthesis; chorismate biosynthesis; chorismate from D-erythrose 4-phosphate and phosphoenolpyruvate: step 7/7. Functionally, catalyzes the anti-1,4-elimination of the C-3 phosphate and the C-6 proR hydrogen from 5-enolpyruvylshikimate-3-phosphate (EPSP) to yield chorismate, which is the branch point compound that serves as the starting substrate for the three terminal pathways of aromatic amino acid biosynthesis. This reaction introduces a second double bond into the aromatic ring system. The sequence is that of Chorismate synthase from Exiguobacterium sp. (strain ATCC BAA-1283 / AT1b).